An 87-amino-acid polypeptide reads, in one-letter code: Small ribosomal subunit protein uS17 (87 aa).

It belongs to the universal ribosomal protein uS17 family. As to quaternary structure, part of the 30S ribosomal subunit.

One of the primary rRNA binding proteins, it binds specifically to the 5'-end of 16S ribosomal RNA. The sequence is that of Small ribosomal subunit protein uS17 from Exiguobacterium sibiricum (strain DSM 17290 / CCUG 55495 / CIP 109462 / JCM 13490 / 255-15).